We begin with the raw amino-acid sequence, 208 residues long: Large ribosomal subunit protein eL13 (208 aa).

The protein belongs to the eukaryotic ribosomal protein eL13 family.

This Chlamydomonas sp. (strain W80) protein is Large ribosomal subunit protein eL13 (RPL13).